The following is a 293-amino-acid chain: Proteinase T (293 aa).

Residues 1–12 (EFIEQDAVVTIS) constitute a propeptide that is removed on maturation. The Peptidase S8 domain maps to 19-293 (PWGLARISSQ…VLINNGEGSA (275 aa)). Intrachain disulfides connect cysteine 46–cysteine 137 and cysteine 192–cysteine 262. Active-site charge relay system residues include aspartate 51, histidine 83, and serine 238.

It belongs to the peptidase S8 family.

Functionally, serine proteinase. The sequence is that of Proteinase T (PROT) from Parengyodontium album (Tritirachium album).